The chain runs to 313 residues: Acetaldehyde dehydrogenase 3 (313 aa).

11–14 (SGNI) contributes to the NAD(+) binding site. The Acyl-thioester intermediate role is filled by cysteine 129. Residues 160 to 168 (SAGPGTRAN) and asparagine 288 contribute to the NAD(+) site.

The protein belongs to the acetaldehyde dehydrogenase family.

It carries out the reaction acetaldehyde + NAD(+) + CoA = acetyl-CoA + NADH + H(+). The chain is Acetaldehyde dehydrogenase 3 from Rhizorhabdus wittichii (strain DSM 6014 / CCUG 31198 / JCM 15750 / NBRC 105917 / EY 4224 / RW1) (Sphingomonas wittichii).